A 415-amino-acid polypeptide reads, in one-letter code: MAPVSGSRSPVREASGGKRRSSSRSPKSIKSSRSPRCRRSRSRSCSRFGDRNGLSHSLSGFSQSSRNQSYRSRSRSRSRERPSAQRSAPFASSSSSAYYGGYSRPYGGDKPWPSLLDKEREESLRQKRLSERERIGELGAPEVWGLSPKNPEPDSDEHTPVEDEEPKKSTTSASSSEDDKKKKRKSSRSKERAKKKRKKKSSKRKHKKYSEDSDSDSESDTDSSDEDSKRRAKKAKKKEKKKKRRGKKYKKKKSKKNRKESSDSSSKESQEEFLENPWKDRSKTEEPSDLIGPEAPKTLASQDDKPLNYGHALLPGEGAAMAEYVKAGKRIPRRGEIGLTSEEIASFECSGYVMSGSRHRRMEAVRLRKENQIYSADEKRALASFNQEERRKRENKILASFREMVYRKTKGKDDK.

The disordered stretch occupies residues 1–309 (MAPVSGSRSP…ASQDDKPLNY (309 aa)). 2 positions are modified to phosphoserine: serine 7 and serine 9. Residues 23–32 (SRSPKSIKSS) are compositionally biased toward low complexity. Positions 33-44 (RSPRCRRSRSRS) are enriched in basic residues. 2 stretches are compositionally biased toward low complexity: residues 54-71 (LSHSLSGFSQSSRNQSYR) and 84-108 (AQRSAPFASSSSSAYYGGYSRPYGG). A Phosphoserine modification is found at serine 62. Lysine 110 is modified (N6-acetyllysine). Positions 116 to 136 (LDKEREESLRQKRLSERERIG) are enriched in basic and acidic residues. Phosphoserine occurs at positions 147 and 155. Basic and acidic residues predominate over residues 156 to 168 (DEHTPVEDEEPKK). A Phosphothreonine modification is found at threonine 159. A necessary for interaction with CIR1 region spans residues 177-272 (EDDKKKKRKS…DSSSKESQEE (96 aa)). The segment covering 181–208 (KKKRKSSRSKERAKKKRKKKSSKRKHKK) has biased composition (basic residues). Positions 212 to 225 (DSDSDSESDTDSSD) are enriched in acidic residues. Residues 230 to 258 (RRAKKAKKKEKKKKRRGKKYKKKKSKKNR) are compositionally biased toward basic residues. 2 stretches are compositionally biased toward basic and acidic residues: residues 259–270 (KESSDSSSKESQ) and 277–286 (PWKDRSKTEE). A necessary for interaction with HDAC3 and transcriptional repression region spans residues 273–415 (FLENPWKDRS…YRKTKGKDDK (143 aa)). Residues lysine 283 and lysine 305 each participate in a glycyl lysine isopeptide (Lys-Gly) (interchain with G-Cter in SUMO2) cross-link.

The protein belongs to the NKAP family. In terms of assembly, component of the Notch corepressor complex. Interacts with CIR1 and HDAC3.

The protein localises to the nucleus. In terms of biological role, acts as a transcriptional repressor. Plays a role as a transcriptional corepressor of the Notch-mediated signaling required for T-cell development. Also involved in the TNF and IL-1 induced NF-kappa-B activation. Associates with chromatin at the Notch-regulated SKP2 promoter. This Rattus norvegicus (Rat) protein is NF-kappa-B-activating protein (Nkap).